The following is a 277-amino-acid chain: DPQFVLAQNVGTHHDLLDICLRRATVQGAQHVFQHVVPQEGKPVTNQKSSGRCWIFSCLNVMRLPFMKKLNIEEFEFSQSYVFFWDKVERCYFFLNAFVDTAQKKEPEDGRLVQYLLMNPTNDGGQWDMLVNIIEKYGVVPKKCFPESHTTEASRRMNDILNHKMREFCIRLRNMVHSGATKAEISATEDTMMEEIFRVVCICLGNPPETFTWEYRDKDKNYQKIGPITPLEFYRQHVKPLFNMEDKICFVNDPRPQHKYNRLYTVDYLSNMVGGRK.

Residue Cys-53 is part of the active site.

The protein belongs to the peptidase C1 family. Homohexamer. Interacts with NUDT12 (via ANK repeats).

It is found in the cytoplasm. Its subcellular location is the cytoplasmic granule. The enzyme catalyses Inactivates bleomycin B2 (a cytotoxic glycometallopeptide) by hydrolysis of a carboxyamide bond of beta-aminoalanine, but also shows general aminopeptidase activity. The specificity varies somewhat with source, but amino acid arylamides of Met, Leu and Ala are preferred.. Its activity is regulated as follows. Strongly inhibited by leupeptin, puromycin, NEM, and divalent cations. Functionally, the normal physiological role of BLM hydrolase is unknown, but it catalyzes the inactivation of the antitumor drug BLM (a glycopeptide) by hydrolyzing the carboxamide bond of its B-aminoalaninamide moiety thus protecting normal and malignant cells from BLM toxicity. This Oryctolagus cuniculus (Rabbit) protein is Bleomycin hydrolase (BLMH).